The sequence spans 983 residues: Protein translocase subunit SecA (983 aa).

ATP-binding positions include Q83, 101–105, and D489; that span reads GEGKT. The tract at residues 948-983 is disordered; sequence ISSEEENNNEKTNININEDLERTKGEAQQTAKNPNE. Polar residues predominate over residues 973 to 983; the sequence is EAQQTAKNPNE.

It belongs to the SecA family. Monomer and homodimer. Part of the essential Sec protein translocation apparatus which comprises SecA, SecYEG and auxiliary proteins SecDF. Other proteins may also be involved.

It is found in the cell membrane. The protein localises to the cytoplasm. It catalyses the reaction ATP + H2O + cellular proteinSide 1 = ADP + phosphate + cellular proteinSide 2.. Part of the Sec protein translocase complex. Interacts with the SecYEG preprotein conducting channel. Has a central role in coupling the hydrolysis of ATP to the transfer of proteins into and across the cell membrane, serving as an ATP-driven molecular motor driving the stepwise translocation of polypeptide chains across the membrane. The protein is Protein translocase subunit SecA of Mesomycoplasma hyopneumoniae (strain 7448) (Mycoplasma hyopneumoniae).